The chain runs to 530 residues: Arginine-containing cyclodipeptide synthase pthA (530 aa).

A Conserved DDXXE motif motif is present at residues 419-423; the sequence is DDRAE.

The protein belongs to the arginine-containing cyclodipeptide synthase family.

The catalysed reaction is L-aspartyl-tRNA(Asp) + L-arginyl-tRNA(Arg) = cyclo(L-arginyl-L-aspartyl) + tRNA(Asp) + tRNA(Arg) + 2 H(+). It participates in secondary metabolite biosynthesis. Functionally, arginine-containing cyclodipeptide synthase; part of the cluster that mediates the biosynthesis of a highly modified cyclo-arginine-aspartate dipeptide (cRD). Within the pathway, pthA acts as the scaffold-generating enzyme and is responsible for formation of the cyclo-Arg-Asp diketopiperazine (cRW) from L-arginyl-tRNA(Arg) + L-aspartyl-tRNA(Asp). Additional enzymes from the cluster then further modify the cyclo-Arg-Asp diketopiperazine (cRW) scaffold. The sequence is that of Arginine-containing cyclodipeptide synthase pthA from Penicillium thymicola.